The sequence spans 319 residues: tRNA (guanine-N(7)-)-methyltransferase (319 aa).

A disordered region spans residues 1-44 (MSESPETPEPSPAQSPEAAPEQPQAARPVTPGSQASFGTYGGRP). The span at 14-26 (QSPEAAPEQPQAA) shows a compositional bias: low complexity. S-adenosyl-L-methionine-binding residues include E103, E128, N155, and D178. D178 is an active-site residue. 2 residues coordinate substrate: K182 and D214. Residues 262 to 288 (APVKEGRAPVSTEHTGPNEGVDETGGW) are disordered. 298-301 (TSFE) serves as a coordination point for substrate.

It belongs to the class I-like SAM-binding methyltransferase superfamily. TrmB family.

It carries out the reaction guanosine(46) in tRNA + S-adenosyl-L-methionine = N(7)-methylguanosine(46) in tRNA + S-adenosyl-L-homocysteine. It functions in the pathway tRNA modification; N(7)-methylguanine-tRNA biosynthesis. Functionally, catalyzes the formation of N(7)-methylguanine at position 46 (m7G46) in tRNA. In Arthrobacter sp. (strain FB24), this protein is tRNA (guanine-N(7)-)-methyltransferase.